The sequence spans 101 residues: 2-amino-4-ketopentanoate thiolase alpha subunit (101 aa).

Belongs to the OrtA family. As to quaternary structure, heterodimer with OrtB.

The catalysed reaction is D-alanine + acetyl-CoA = (2R)-2-amino-4-oxopentanoate + CoA. With respect to regulation, completely inhibited by p-chloromercuribenzoate (p-ClHgBzO) and acetyl-CoA, and partially inhibited by N-ethylmaleimide. In terms of biological role, involved in the ornithine fermentation pathway. Catalyzes the thiolytic cleavage of 2-amino-4-ketopentanoate (AKP) with coenzyme A (CoA) to form acetyl-CoA and alanine. It is strictly specific for AKP. The chain is 2-amino-4-ketopentanoate thiolase alpha subunit from Acetoanaerobium sticklandii (strain ATCC 12662 / DSM 519 / JCM 1433 / CCUG 9281 / NCIMB 10654 / HF) (Clostridium sticklandii).